A 69-amino-acid chain; its full sequence is uncharacterized protein (69 aa).

2 disordered regions span residues 1 to 32 (MSAPYKNLDRDTKHTHPKLNETERNLNRGWGD) and 44 to 69 (QSDADKQLAEDKMETKYEKSKPAPSD). Basic and acidic residues-rich tracts occupy residues 7–32 (NLDRDTKHTHPKLNETERNLNRGWGD) and 46–69 (DADKQLAEDKMETKYEKSKPAPSD).

This is an uncharacterized protein from Schizosaccharomyces pombe (strain 972 / ATCC 24843) (Fission yeast).